Here is a 252-residue protein sequence, read N- to C-terminus: MAEGGAARGTREEQGKLPEQEEEEEEDPQVLLGSGHCKWFNVRMGFGFISMTSREGSPLENPVDVFVHQSKLYMDGFRSLKEGEPVEFTFKKSSKGFESLRVTGPGGNPCLGSERRPKAKTVQKRKPKGDRCYNCGGLDHHAKECNLPPQPKKCHYCQSTMHMVANCPHKIVPQHPTTSQGRYEAEPQPSTSSFQREGGGAFDYSSPSYSQEGRSELSERSSRSPQEASLSKISTSPEEQSRKGPSVQKKKK.

The disordered stretch occupies residues methionine 1–valine 30. Basic and acidic residues predominate over residues glycine 9–glutamate 19. Residues leucine 32 to proline 105 enclose the CSD domain. CCHC-type zinc fingers lie at residues aspartate 130–leucine 147 and lysine 152–histidine 169. Zn(2+) contacts are provided by cysteine 132, cysteine 135, histidine 140, cysteine 145, cysteine 154, cysteine 157, histidine 162, and cysteine 167. The interval valine 172–lysine 252 is disordered. The segment covering glycine 213–serine 222 has biased composition (basic and acidic residues). Over residues proline 225–glutamate 238 the composition is skewed to polar residues.

It belongs to the lin-28 family.

It localises to the nucleus. The protein localises to the nucleolus. In terms of biological role, suppressor of specific microRNA (miRNA) biogenesis. Binds target primary miRNA transcripts and sequester them in the nucleolus, away from the microprocessor complex, hence preventing their processing into mature miRNA. The specific interaction with target pri-miRNAs occurs via an 5'-GGAG-3' motif in the pre-miRNA terminal loop. The protein is Protein lin-28 homolog B (lin28b) of Xenopus laevis (African clawed frog).